Here is a 144-residue protein sequence, read N- to C-terminus: Large ribosomal subunit protein uL15 (144 aa).

Positions 1-45 are disordered; the sequence is MNLNTLSPDPGSRPSRRRVGRGIGSGLGKTCGKGHKGQKSRAGGY. The segment covering 21–31 has biased composition (gly residues); it reads RGIGSGLGKTC.

This sequence belongs to the universal ribosomal protein uL15 family. Part of the 50S ribosomal subunit.

Binds to the 23S rRNA. This chain is Large ribosomal subunit protein uL15, found in Legionella pneumophila (strain Corby).